The following is a 392-amino-acid chain: Phosphoglycerate kinase (392 aa).

Substrate-binding positions include 21 to 23, R36, 59 to 62, R113, and R146; these read DFN and HLGR. ATP contacts are provided by residues K197, E319, and 345 to 348; that span reads GGDT.

It belongs to the phosphoglycerate kinase family. Monomer.

The protein localises to the cytoplasm. It catalyses the reaction (2R)-3-phosphoglycerate + ATP = (2R)-3-phospho-glyceroyl phosphate + ADP. The protein operates within carbohydrate degradation; glycolysis; pyruvate from D-glyceraldehyde 3-phosphate: step 2/5. The polypeptide is Phosphoglycerate kinase (Francisella tularensis subsp. novicida (strain U112)).